Reading from the N-terminus, the 341-residue chain is S-adenosylmethionine:tRNA ribosyltransferase-isomerase (341 aa).

It belongs to the QueA family. In terms of assembly, monomer.

It localises to the cytoplasm. It catalyses the reaction 7-aminomethyl-7-carbaguanosine(34) in tRNA + S-adenosyl-L-methionine = epoxyqueuosine(34) in tRNA + adenine + L-methionine + 2 H(+). Its pathway is tRNA modification; tRNA-queuosine biosynthesis. In terms of biological role, transfers and isomerizes the ribose moiety from AdoMet to the 7-aminomethyl group of 7-deazaguanine (preQ1-tRNA) to give epoxyqueuosine (oQ-tRNA). This Caldanaerobacter subterraneus subsp. tengcongensis (strain DSM 15242 / JCM 11007 / NBRC 100824 / MB4) (Thermoanaerobacter tengcongensis) protein is S-adenosylmethionine:tRNA ribosyltransferase-isomerase.